The chain runs to 195 residues: Probable nicotinate-nucleotide adenylyltransferase (195 aa).

This sequence belongs to the NadD family.

The enzyme catalyses nicotinate beta-D-ribonucleotide + ATP + H(+) = deamido-NAD(+) + diphosphate. It participates in cofactor biosynthesis; NAD(+) biosynthesis; deamido-NAD(+) from nicotinate D-ribonucleotide: step 1/1. Its function is as follows. Catalyzes the reversible adenylation of nicotinate mononucleotide (NaMN) to nicotinic acid adenine dinucleotide (NaAD). The chain is Probable nicotinate-nucleotide adenylyltransferase from Mesorhizobium japonicum (strain LMG 29417 / CECT 9101 / MAFF 303099) (Mesorhizobium loti (strain MAFF 303099)).